Here is a 250-residue protein sequence, read N- to C-terminus: Probable transcriptional regulatory protein Nther_1800 (250 aa).

The protein belongs to the TACO1 family.

It is found in the cytoplasm. The chain is Probable transcriptional regulatory protein Nther_1800 from Natranaerobius thermophilus (strain ATCC BAA-1301 / DSM 18059 / JW/NM-WN-LF).